Consider the following 317-residue polypeptide: Transaldolase (317 aa).

The active-site Schiff-base intermediate with substrate is the lysine 126.

It belongs to the transaldolase family. Type 1 subfamily. Homodimer.

Its subcellular location is the cytoplasm. It catalyses the reaction D-sedoheptulose 7-phosphate + D-glyceraldehyde 3-phosphate = D-erythrose 4-phosphate + beta-D-fructose 6-phosphate. It participates in carbohydrate degradation; pentose phosphate pathway; D-glyceraldehyde 3-phosphate and beta-D-fructose 6-phosphate from D-ribose 5-phosphate and D-xylulose 5-phosphate (non-oxidative stage): step 2/3. Its function is as follows. Transaldolase is important for the balance of metabolites in the pentose-phosphate pathway. This Burkholderia ambifaria (strain ATCC BAA-244 / DSM 16087 / CCUG 44356 / LMG 19182 / AMMD) (Burkholderia cepacia (strain AMMD)) protein is Transaldolase.